The chain runs to 507 residues: Cobyric acid synthase (507 aa).

The region spanning 251-448 (DIDIAVVHLP…LHGLFDSDAF (198 aa)) is the GATase cobBQ-type domain. The active-site Nucleophile is the C332. H440 is a catalytic residue.

This sequence belongs to the CobB/CobQ family. CobQ subfamily.

The protein operates within cofactor biosynthesis; adenosylcobalamin biosynthesis. Catalyzes amidations at positions B, D, E, and G on adenosylcobyrinic A,C-diamide. NH(2) groups are provided by glutamine, and one molecule of ATP is hydrogenolyzed for each amidation. This Klebsiella pneumoniae subsp. pneumoniae (strain ATCC 700721 / MGH 78578) protein is Cobyric acid synthase.